The sequence spans 367 residues: Heme A synthase 2 (367 aa).

The next 5 membrane-spanning stretches (helical) occupy residues 28–48 (MVAI…GIGA), 114–134 (MWGR…LWTG), 143–163 (WLVT…WMVA), 180–200 (VHYC…LTVL), and 221–241 (MAMG…FLSG). Histidine 284 lines the heme pocket. A run of 3 helical transmembrane segments spans residues 286–306 (LLGT…IRAD), 314–334 (AFLV…TTLV), and 340–360 (IGIV…WAWF). Residue histidine 344 coordinates heme.

The protein belongs to the COX15/CtaA family. Type 2 subfamily. Interacts with CtaB. Requires heme b as cofactor.

It localises to the cell membrane. It carries out the reaction Fe(II)-heme o + 2 A + H2O = Fe(II)-heme a + 2 AH2. It participates in porphyrin-containing compound metabolism; heme A biosynthesis; heme A from heme O: step 1/1. In terms of biological role, catalyzes the conversion of heme O to heme A by two successive hydroxylations of the methyl group at C8. The first hydroxylation forms heme I, the second hydroxylation results in an unstable dihydroxymethyl group, which spontaneously dehydrates, resulting in the formyl group of heme A. The protein is Heme A synthase 2 of Acidiphilium cryptum (strain JF-5).